Reading from the N-terminus, the 191-residue chain is Elongation factor P (191 aa).

Belongs to the elongation factor P family.

Its subcellular location is the cytoplasm. The protein operates within protein biosynthesis; polypeptide chain elongation. Functionally, involved in peptide bond synthesis. Stimulates efficient translation and peptide-bond synthesis on native or reconstituted 70S ribosomes in vitro. Probably functions indirectly by altering the affinity of the ribosome for aminoacyl-tRNA, thus increasing their reactivity as acceptors for peptidyl transferase. The polypeptide is Elongation factor P (Janthinobacterium sp. (strain Marseille) (Minibacterium massiliensis)).